Consider the following 113-residue polypeptide: uncharacterized protein (113 aa).

A helical transmembrane segment spans residues 7 to 29; sequence FFILIVLLFTVFSLKEFIPNTFC.

Its subcellular location is the membrane. This is an uncharacterized protein from Aquifex aeolicus (strain VF5).